The following is a 299-amino-acid chain: MTLYDVPAPAKLNLFLHVVGRRADGYHLLQTAFRFIDLADTLHFEARADGAIGRAYELPGVAESDDLVMRAARSLQRATGTRQGAQIGLHKRIPQGGGLGGGSSDAATTLIALNRLWGTGLSRSQLMQLALPLGADVPVFVFGQSAFAQGVGEDLTAVALSPAAYLVVQPDAGVPTAVIFSDPDLTRDCASVTIADFLALPTSCFGRNDLEPVVLRRYPEVSGAVRWLFEHGLRVRMSGSGACLFAEFPTLPEAVLAQEEITATMRVAGKTTSHTHPGFRLVQASTGLTEHPLRNWIAS.

Lysine 11 is an active-site residue. Residue 94 to 104 (PQGGGLGGGSS) coordinates ATP. Residue aspartate 136 is part of the active site.

It belongs to the GHMP kinase family. IspE subfamily.

It carries out the reaction 4-CDP-2-C-methyl-D-erythritol + ATP = 4-CDP-2-C-methyl-D-erythritol 2-phosphate + ADP + H(+). It functions in the pathway isoprenoid biosynthesis; isopentenyl diphosphate biosynthesis via DXP pathway; isopentenyl diphosphate from 1-deoxy-D-xylulose 5-phosphate: step 3/6. Functionally, catalyzes the phosphorylation of the position 2 hydroxy group of 4-diphosphocytidyl-2C-methyl-D-erythritol. This chain is 4-diphosphocytidyl-2-C-methyl-D-erythritol kinase, found in Bordetella pertussis (strain Tohama I / ATCC BAA-589 / NCTC 13251).